Consider the following 450-residue polypeptide: Keratin, type I cytoskeletal 25 (450 aa).

The interval 1-25 (MSLRLPSGSRRASPRPTTGSLRLSS) is disordered. A head region spans residues 1–78 (MSLRLPSGSR…VNEGGLLSGN (78 aa)). The segment at 79 to 114 (EKVTMQNLNDRLASYLENVRALEEANADLEQKIKGW) is coil 1A. Residues 79-394 (EKVTMQNLND…LLIGGDDGAC (316 aa)) form the IF rod domain. Residues 115 to 136 (YEKFGPGSCRGLDHDYSRYFPI) form a linker 1 region. A coil 1B region spans residues 137–228 (IEDLKNQIIA…KNHKEEMQVL (92 aa)). The tract at residues 229 to 251 (QCAAGGNVNVEMNAAPGVDLTVL) is linker 12. The interval 252-390 (LNNMRAEYEA…ETYCLLIGGD (139 aa)) is coil 2. Positions 391 to 450 (DGACKSGGYKSKDYGAGNVGNQMKDPVKAIVVKKVLEEVDQRSKILTPRLHSLEEKSQSN) are tail. At Ser442 the chain carries Phosphoserine.

The protein belongs to the intermediate filament family. In terms of assembly, heterodimer of a type I and a type II keratin. Heterodimer with type II keratin KRT5 leading to the formation of keratin intermediate filament (KIF) network. Interacts with KRT6A to form filaments.

The protein resides in the cytoplasm. In terms of biological role, essential for the proper assembly of type I and type II keratin protein complexes and formation of keratin intermediate filaments in the inner root sheath (irs). Plays a role in the cytoskeleton organization. The chain is Keratin, type I cytoskeletal 25 from Bos taurus (Bovine).